The chain runs to 508 residues: Putative POTE ankyrin domain family member M (508 aa).

ANK repeat units follow at residues 172–201, 205–234, 238–267, 271–300, and 304–333; these read QKRT…QLNI, KKRT…DPNI, YGNT…DIES, HGLT…NLNA, and YGRT…DVSS. The disordered stretch occupies residues 369–487; the sequence is SSENSNPEQD…KQLSEEQNTG (119 aa). Basic and acidic residues-rich tracts occupy residues 377 to 392 and 406 to 421; these read QDLK…RLKG and EINK…EMKK. Residues 476–487 show a composition bias toward polar residues; the sequence is TQKQLSEEQNTG.

This sequence belongs to the POTE family.

This chain is Putative POTE ankyrin domain family member M (POTEM), found in Homo sapiens (Human).